The chain runs to 541 residues: Mesoderm induction early response protein 2 (541 aa).

The residue at position 11 (S11) is a Phosphoserine. Disordered stretches follow at residues D100 to M119 and L131 to A186. The span at Q140 to S165 shows a compositional bias: polar residues. The 98-residue stretch at K194 to V291 folds into the ELM2 domain. The region spanning D296–R348 is the SANT domain. Positions V364–Q440 are disordered.

Part of a complex containing at least CDYL, MIER1, MIER2, HDAC1 and HDAC2.

The protein localises to the nucleus. Functionally, transcriptional repressor. This is Mesoderm induction early response protein 2 (Mier2) from Mus musculus (Mouse).